We begin with the raw amino-acid sequence, 167 residues long: Interferon gamma (167 aa).

The N-terminal stretch at 1-23 is a signal peptide; the sequence is MSYTSYILAFQLCLILGSYGCYC. Residue glutamine 24 is modified to Pyrrolidone carboxylic acid. Residues asparagine 41, asparagine 108, and asparagine 117 are each glycosylated (N-linked (GlcNAc...) asparagine).

This sequence belongs to the type II (or gamma) interferon family. Homodimer. Interacts with IFNGR1 (via extracellular domain); this interaction promotes IFNGR1 dimerization. As to expression, released primarily from activated T lymphocytes.

It is found in the secreted. Functionally, type II interferon produced by immune cells such as T-cells and NK cells that plays crucial roles in antimicrobial, antiviral, and antitumor responses by activating effector immune cells and enhancing antigen presentation. Primarily signals through the JAK-STAT pathway after interaction with its receptor IFNGR1 to affect gene regulation. Upon IFNG binding, IFNGR1 intracellular domain opens out to allow association of downstream signaling components JAK2, JAK1 and STAT1, leading to STAT1 activation, nuclear translocation and transcription of IFNG-regulated genes. Many of the induced genes are transcription factors such as IRF1 that are able to further drive regulation of a next wave of transcription. Plays a role in class I antigen presentation pathway by inducing a replacement of catalytic proteasome subunits with immunoproteasome subunits. In turn, increases the quantity, quality, and repertoire of peptides for class I MHC loading. Increases the efficiency of peptide generation also by inducing the expression of activator PA28 that associates with the proteasome and alters its proteolytic cleavage preference. Up-regulates as well MHC II complexes on the cell surface by promoting expression of several key molecules such as cathepsins B/CTSB, H/CTSH, and L/CTSL. Participates in the regulation of hematopoietic stem cells during development and under homeostatic conditions by affecting their development, quiescence, and differentiation. In Oryctolagus cuniculus (Rabbit), this protein is Interferon gamma (IFNG).